Consider the following 510-residue polypeptide: Metalloprotease TIKI homolog (510 aa).

The signal sequence occupies residues 1–30 (MQVKIVQVFPCLVLLVKLVLLSVLLPSATG). Residues 31–489 (SYHCSNNATQ…FIPSASSGLR (459 aa)) are Extracellular-facing. N-linked (GlcNAc...) asparagine glycosylation is found at Asn37, Asn98, Asn108, Asn141, Asn223, Asn281, Asn322, Asn383, and Asn417. Residues 435–471 (TSLNSATASTTVATPTSSVTPPTSSSSQTRSLTISDS) show a composition bias toward low complexity. The segment at 435 to 477 (TSLNSATASTTVATPTSSVTPPTSSSSQTRSLTISDSQRTSDD) is disordered. The chain crosses the membrane as a helical span at residues 490–510 (YNIGLVCVTLFFVLLIITSAL).

Belongs to the TIKI family. Requires Mn(2+) as cofactor. The cofactor is Co(2+).

It is found in the membrane. Metalloprotease. The polypeptide is Metalloprotease TIKI homolog (Amphimedon queenslandica (Sponge)).